A 218-amino-acid polypeptide reads, in one-letter code: Ribosomal RNA small subunit methyltransferase G (218 aa).

S-adenosyl-L-methionine contacts are provided by residues glycine 86, leucine 91, 137–138 (AE), and arginine 153.

The protein belongs to the methyltransferase superfamily. RNA methyltransferase RsmG family.

It localises to the cytoplasm. It catalyses the reaction guanosine(527) in 16S rRNA + S-adenosyl-L-methionine = N(7)-methylguanosine(527) in 16S rRNA + S-adenosyl-L-homocysteine. In terms of biological role, specifically methylates the N7 position of guanine in position 527 of 16S rRNA. The chain is Ribosomal RNA small subunit methyltransferase G from Nitratidesulfovibrio vulgaris (strain ATCC 29579 / DSM 644 / CCUG 34227 / NCIMB 8303 / VKM B-1760 / Hildenborough) (Desulfovibrio vulgaris).